Here is a 235-residue protein sequence, read N- to C-terminus: Uridylate kinase (235 aa).

Lysine 8–glycine 11 is a binding site for ATP. Glycine 49 serves as a coordination point for UMP. The ATP site is built by glycine 50 and arginine 54. Position 131-138 (threonine 131–threonine 138) interacts with UMP. Positions 159, 165, and 168 each coordinate ATP.

The protein belongs to the UMP kinase family. As to quaternary structure, homohexamer.

It is found in the cytoplasm. It catalyses the reaction UMP + ATP = UDP + ADP. It participates in pyrimidine metabolism; CTP biosynthesis via de novo pathway; UDP from UMP (UMPK route): step 1/1. With respect to regulation, inhibited by UTP. In terms of biological role, catalyzes the reversible phosphorylation of UMP to UDP. In Mycoplasma pneumoniae (strain ATCC 29342 / M129 / Subtype 1) (Mycoplasmoides pneumoniae), this protein is Uridylate kinase.